The primary structure comprises 268 residues: 5'-nucleotidase SurE (268 aa).

The a divalent metal cation site is built by Asp24, Asp25, Ser55, and Asn111.

It belongs to the SurE nucleotidase family. The cofactor is a divalent metal cation.

The protein resides in the cytoplasm. It carries out the reaction a ribonucleoside 5'-phosphate + H2O = a ribonucleoside + phosphate. Functionally, nucleotidase that shows phosphatase activity on nucleoside 5'-monophosphates. The protein is 5'-nucleotidase SurE of Deinococcus radiodurans (strain ATCC 13939 / DSM 20539 / JCM 16871 / CCUG 27074 / LMG 4051 / NBRC 15346 / NCIMB 9279 / VKM B-1422 / R1).